A 212-amino-acid polypeptide reads, in one-letter code: Thymidylate kinase (212 aa).

An ATP-binding site is contributed by 10–17 (GIDGCGKT).

Belongs to the thymidylate kinase family.

It carries out the reaction dTMP + ATP = dTDP + ADP. Its function is as follows. Phosphorylation of dTMP to form dTDP in both de novo and salvage pathways of dTTP synthesis. In Prochlorococcus marinus (strain MIT 9312), this protein is Thymidylate kinase.